Here is a 272-residue protein sequence, read N- to C-terminus: Undecaprenyl-diphosphatase (272 aa).

7 helical membrane passes run 22–42, 45–65, 92–112, 118–138, 189–209, 228–248, and 251–271; these read FLPVSSTGHMIIVGHMLGFTG, AETFEVIIQLGSILAVVVVFW, SHIILAMLPAVTLGLMFHDVI, PQSVMYALVIGGVLLITAEIL, YTASEFSFILAVPMMMGASGL, VGFVTAFVVALVAIKTFLALI, and ISFIPFAIYRFIVAAAVYWVF.

It belongs to the UppP family.

Its subcellular location is the cell inner membrane. It carries out the reaction di-trans,octa-cis-undecaprenyl diphosphate + H2O = di-trans,octa-cis-undecaprenyl phosphate + phosphate + H(+). In terms of biological role, catalyzes the dephosphorylation of undecaprenyl diphosphate (UPP). Confers resistance to bacitracin. This is Undecaprenyl-diphosphatase from Photorhabdus laumondii subsp. laumondii (strain DSM 15139 / CIP 105565 / TT01) (Photorhabdus luminescens subsp. laumondii).